Reading from the N-terminus, the 189-residue chain is MTNAVYLASASPRRKELLTQLGIEFTQFSVDADESQLPNELPYDYVERLARLKAQSGVALGYTDRPVLGSDTVVVIDNQSLGKPCDENDFTHTLKRLSGNTHQVLTAVAFATTDKVLSCVVSTNVTFKTLSDDEIHTYWQSGEPQDKAGGYGIQGLGGRFVTHISGSYFAVVGLPLYETEQLLQTFLRG.

Aspartate 71 acts as the Proton acceptor in catalysis.

This sequence belongs to the Maf family. YhdE subfamily. It depends on a divalent metal cation as a cofactor.

It is found in the cytoplasm. It catalyses the reaction dTTP + H2O = dTMP + diphosphate + H(+). It carries out the reaction UTP + H2O = UMP + diphosphate + H(+). Functionally, nucleoside triphosphate pyrophosphatase that hydrolyzes dTTP and UTP. May have a dual role in cell division arrest and in preventing the incorporation of modified nucleotides into cellular nucleic acids. This chain is dTTP/UTP pyrophosphatase, found in Pseudoalteromonas translucida (strain TAC 125).